A 330-amino-acid polypeptide reads, in one-letter code: Aspartate--ammonia ligase (330 aa).

Belongs to the class-II aminoacyl-tRNA synthetase family. AsnA subfamily.

The protein resides in the cytoplasm. The catalysed reaction is L-aspartate + NH4(+) + ATP = L-asparagine + AMP + diphosphate + H(+). The protein operates within amino-acid biosynthesis; L-asparagine biosynthesis; L-asparagine from L-aspartate (ammonia route): step 1/1. This chain is Aspartate--ammonia ligase, found in Streptococcus uberis (strain ATCC BAA-854 / 0140J).